We begin with the raw amino-acid sequence, 541 residues long: Chaperonin GroEL 2 (541 aa).

ATP-binding positions include 29–32 (TLGP), 86–90 (DGTTT), Gly-413, 476–478 (NAA), and Asp-492.

This sequence belongs to the chaperonin (HSP60) family. As to quaternary structure, forms a cylinder of 14 subunits composed of two heptameric rings stacked back-to-back. Interacts with the co-chaperonin GroES.

The protein resides in the secreted. It localises to the capsule. The protein localises to the cell surface. Its subcellular location is the cell wall. The catalysed reaction is ATP + H2O + a folded polypeptide = ADP + phosphate + an unfolded polypeptide.. Together with its co-chaperonin GroES, plays an essential role in assisting protein folding. The GroEL-GroES system forms a nano-cage that allows encapsulation of the non-native substrate proteins and provides a physical environment optimized to promote and accelerate protein folding. The polypeptide is Chaperonin GroEL 2 (Mycobacterium sp. (strain KMS)).